Here is a 315-residue protein sequence, read N- to C-terminus: Methionyl-tRNA formyltransferase (315 aa).

113-116 (SLLP) is a binding site for (6S)-5,6,7,8-tetrahydrofolate.

Belongs to the Fmt family.

It catalyses the reaction L-methionyl-tRNA(fMet) + (6R)-10-formyltetrahydrofolate = N-formyl-L-methionyl-tRNA(fMet) + (6S)-5,6,7,8-tetrahydrofolate + H(+). Attaches a formyl group to the free amino group of methionyl-tRNA(fMet). The formyl group appears to play a dual role in the initiator identity of N-formylmethionyl-tRNA by promoting its recognition by IF2 and preventing the misappropriation of this tRNA by the elongation apparatus. This is Methionyl-tRNA formyltransferase from Pectobacterium carotovorum subsp. carotovorum (strain PC1).